The primary structure comprises 125 residues: Protein U2 (125 aa).

Belongs to the nanovirus U2 protein family.

This is Protein U2 (DNA-U2) from Milk vetch dwarf virus (isolate N) (MDV).